The following is a 100-amino-acid chain: Urease subunit gamma (100 aa).

The protein belongs to the urease gamma subunit family. In terms of assembly, heterotrimer of UreA (gamma), UreB (beta) and UreC (alpha) subunits. Three heterotrimers associate to form the active enzyme.

Its subcellular location is the cytoplasm. It carries out the reaction urea + 2 H2O + H(+) = hydrogencarbonate + 2 NH4(+). It participates in nitrogen metabolism; urea degradation; CO(2) and NH(3) from urea (urease route): step 1/1. In Haemophilus influenzae (strain ATCC 51907 / DSM 11121 / KW20 / Rd), this protein is Urease subunit gamma.